Here is a 77-residue protein sequence, read N- to C-terminus: U10-lycotoxin-Ls1b (77 aa).

Residues 1–20 (MKLIIFTGLVLFAIVSLIEA) form the signal peptide. Residues 21–26 (EEESGR) constitute a propeptide that is removed on maturation.

Belongs to the neurotoxin 19 (CSTX) family. 09 (U10-Lctx) subfamily. In terms of processing, contains 4 disulfide bonds. As to expression, expressed by the venom gland.

It localises to the secreted. The chain is U10-lycotoxin-Ls1b from Lycosa singoriensis (Wolf spider).